A 79-amino-acid polypeptide reads, in one-letter code: Conotoxin ArMSGL-021 (79 aa).

A signal peptide spans 1 to 20 (MSRLGIMVLTLLLLVFIVTS). The propeptide occupies 21 to 44 (HQDAGEKQATHRGAINFRWRRSLI). Disulfide bonds link cysteine 52–cysteine 64, cysteine 56–cysteine 73, and cysteine 63–cysteine 77. Leucine amide is present on leucine 78.

The protein belongs to the conotoxin O3 superfamily. As to expression, expressed by the venom duct.

Its subcellular location is the secreted. This Conus arenatus (Sand-dusted cone) protein is Conotoxin ArMSGL-021.